The primary structure comprises 192 residues: Protein GrpE (192 aa).

Positions 1–34 (MSSKEQKTPNEQVSEEMENTAEQQVEATQETGEC) are disordered. Polar residues predominate over residues 20–31 (TAEQQVEATQET).

The protein belongs to the GrpE family. In terms of assembly, homodimer.

It is found in the cytoplasm. Its function is as follows. Participates actively in the response to hyperosmotic and heat shock by preventing the aggregation of stress-denatured proteins, in association with DnaK and GrpE. It is the nucleotide exchange factor for DnaK and may function as a thermosensor. Unfolded proteins bind initially to DnaJ; upon interaction with the DnaJ-bound protein, DnaK hydrolyzes its bound ATP, resulting in the formation of a stable complex. GrpE releases ADP from DnaK; ATP binding to DnaK triggers the release of the substrate protein, thus completing the reaction cycle. Several rounds of ATP-dependent interactions between DnaJ, DnaK and GrpE are required for fully efficient folding. This chain is Protein GrpE, found in Yersinia pestis.